A 229-amino-acid chain; its full sequence is 7-cyano-7-deazaguanine synthase (229 aa).

15–25 (LSGGLDSTTCL) contributes to the ATP binding site. Positions 192, 202, 205, and 208 each coordinate Zn(2+).

This sequence belongs to the QueC family. It depends on Zn(2+) as a cofactor.

The enzyme catalyses 7-carboxy-7-deazaguanine + NH4(+) + ATP = 7-cyano-7-deazaguanine + ADP + phosphate + H2O + H(+). Its pathway is purine metabolism; 7-cyano-7-deazaguanine biosynthesis. Catalyzes the ATP-dependent conversion of 7-carboxy-7-deazaguanine (CDG) to 7-cyano-7-deazaguanine (preQ(0)). In Acinetobacter baylyi (strain ATCC 33305 / BD413 / ADP1), this protein is 7-cyano-7-deazaguanine synthase.